A 260-amino-acid polypeptide reads, in one-letter code: Late transcription factor 1 (260 aa).

It belongs to the chordopoxvirinae VLTF-1 family. In terms of assembly, interacts with the late transcription factors VLTF-2 and VLTF-3. Interacts with the late transcription elongation factor VLTF-4. Interacts with itself.

Functionally, associates with RNA polymerase to initiate transcription from late gene promoters. The sequence is that of Late transcription factor 1 (OPG093) from Vaccinia virus (strain Ankara) (VACV).